Consider the following 301-residue polypeptide: MLAVAFVGATGTGKSLLSLDAARDFNGHIVNADSMQLYRDMDIGTAKLSHSARQGIPHHQIDVIDPSSEASVARYKLSAQTCIKHIHALNSIPFLVGGSGLYVSSVVHNLQFPPTDGRVRKLLEDEADKSGIGVLHDRLLKLHPGFTVSRGNRRRIIRALEVAYITGRSPNPVLPLQNRANNFIVINLICDKGTLDIRLQKRVESFYDNGLIDEVRLLQEKYVLGRTAAKAIGYKQAIMYLAGEISCADAKDSTLQETIRLANKQIKWFRRYSGQHIVDTTDMSVAYEQIRSILNKSFRIS.

8–15 (GATGTGKS) is an ATP binding site. 10-15 (TGTGKS) contributes to the substrate binding site. The interaction with substrate tRNA stretch occupies residues 33-36 (DSMQ).

The protein belongs to the IPP transferase family. Monomer. It depends on Mg(2+) as a cofactor.

The enzyme catalyses adenosine(37) in tRNA + dimethylallyl diphosphate = N(6)-dimethylallyladenosine(37) in tRNA + diphosphate. Functionally, catalyzes the transfer of a dimethylallyl group onto the adenine at position 37 in tRNAs that read codons beginning with uridine, leading to the formation of N6-(dimethylallyl)adenosine (i(6)A). This Tropheryma whipplei (strain Twist) (Whipple's bacillus) protein is tRNA dimethylallyltransferase.